The primary structure comprises 144 residues: Prefoldin subunit alpha (144 aa).

This sequence belongs to the prefoldin alpha subunit family. As to quaternary structure, heterohexamer of two alpha and four beta subunits.

The protein localises to the cytoplasm. Functionally, molecular chaperone capable of stabilizing a range of proteins. Seems to fulfill an ATP-independent, HSP70-like function in archaeal de novo protein folding. This Methanococcus maripaludis (strain C7 / ATCC BAA-1331) protein is Prefoldin subunit alpha.